The sequence spans 327 residues: MPPSLTREEVVPSRKRIKLPPWLEVAKPRLIPLLLATTLGGMALTEGWPLSSPRLVCTLGGGALAAAAAGVLNCLWEQELDGRMLRTSGRALPSGRLSPSAAFVGAVSCTLAAAALLVSGVNCLAAGLSLLGLCSYVLLYTALLKPRTTQNIVVGGVAGAIPPLVGAAAATGHIGLGGWWLFALVMVWTPAHFWALALLLHDDYRAVGIPMLPVVKGPLVTTRAIRRYGWATILLSFLGIWALPEGGALYGLLILPFNGRLLQMVERLAAEPNNRDRAKGLFRWSILYLFGVCLLLVMSRMSGAAQFDLQVRAVVDILSGGFLTVAS.

7 helical membrane passes run 55–75 (LVCT…LNCL), 101–121 (AAFV…VSGV), 124–144 (LAAG…TALL), 152–172 (IVVG…AATG), 180–200 (WLFA…ALLL), 237–257 (FLGI…ILPF), and 278–298 (AKGL…LLVM).

The protein belongs to the UbiA prenyltransferase family. Protoheme IX farnesyltransferase subfamily.

It localises to the cell inner membrane. The enzyme catalyses heme b + (2E,6E)-farnesyl diphosphate + H2O = Fe(II)-heme o + diphosphate. It participates in porphyrin-containing compound metabolism; heme O biosynthesis; heme O from protoheme: step 1/1. Converts heme B (protoheme IX) to heme O by substitution of the vinyl group on carbon 2 of heme B porphyrin ring with a hydroxyethyl farnesyl side group. The sequence is that of Protoheme IX farnesyltransferase from Synechococcus sp. (strain CC9311).